Here is a 490-residue protein sequence, read N- to C-terminus: MLRQVLRRSLSDSRRPLRSVGSISCSARASGIGMRAYSSQIFKEGMQLETHTDIQSAAREQAQERMGSEALASNNSVLKHAYQESVDHGTRPIYLDMQATTPTDPRVVDTMLKFYTGLYGNPHSNTHSYGWETSQEVEKARKNVADVIKADPKEIIFTSGATESNNMALKGVARFYKKRKNHIITTRTEHKCVLEAARSMKDEGFDVTFLNVNEDGLVSLEELEQAIRPETSLVSVMSVNNEIGVVQPIKEIGAICRRHKVFFHSDAAQAYGKIPIDVDEMNIDLLSISSHKIYGPKGIGALYVRRRPRVRMEPLLSGGGQERGFRSGTLPPPLVVGLGHAAKLMVEEYEYDSAHVRRLSDRLLKGLLSIEQTTLNGSADHRYPGCVNVSFAFVEGESLLMALRDIALSSGSACTSASLEPSYVLHAIGRDDALAHSSIRFGIGRFTTEAEVDYVIKAITERVEFLRELSPLWEMYKDGIDLNTIEWSGH.

Residues 161–162, Asn-241, Gln-269, and 289–291 each bind pyridoxal 5'-phosphate; these read AT and SSH. An N6-(pyridoxal phosphate)lysine modification is found at Lys-292. Thr-329 is a pyridoxal 5'-phosphate binding site. Cys-414 acts as the Cysteine persulfide intermediate in catalysis. Position 414 (Cys-414) interacts with [2Fe-2S] cluster.

This sequence belongs to the class-V pyridoxal-phosphate-dependent aminotransferase family. NifS/IscS subfamily. Requires pyridoxal 5'-phosphate as cofactor.

It is found in the mitochondrion. It carries out the reaction (sulfur carrier)-H + L-cysteine = (sulfur carrier)-SH + L-alanine. Functionally, catalyzes the removal of elemental sulfur from cysteine to produce alanine. It supplies the inorganic sulfur for iron-sulfur (Fe-S) clusters. Plays a role in both tRNA-processing and mitochondrial metabolism. Involved in the 2-thio-modification of both 5-carboxymethylaminomethyl-2-thiouridine in mitochondrial tRNAs and 5-methoxycarbonylmethyl-2-thiouridine (mcm5s2U) in cytoplasmic tRNAs. This chain is Cysteine desulfurase, mitochondrial, found in Eremothecium gossypii (strain ATCC 10895 / CBS 109.51 / FGSC 9923 / NRRL Y-1056) (Yeast).